Reading from the N-terminus, the 328-residue chain is Nitrilase (328 aa).

The 278-residue stretch at 9 to 286 (VRVAAIQAEP…EGILYANVDV (278 aa)) folds into the CN hydrolase domain. Residue Glu49 is the Proton acceptor of the active site. Residue Lys131 is part of the active site. The active-site Nucleophile is the Cys166.

It belongs to the carbon-nitrogen hydrolase superfamily. Nitrilase family.

It catalyses the reaction a nitrile + 2 H2O = a carboxylate + NH4(+). Functionally, nitrilase that hydrolyzes preferentially 4-cyanopyridine. Is also able to hydrolyze some aliphatic nitriles, such as (R,S)-mandelonitrile. This Penicillium rubens (strain ATCC 28089 / DSM 1075 / NRRL 1951 / Wisconsin 54-1255) (Penicillium chrysogenum) protein is Nitrilase.